Here is a 141-residue protein sequence, read N- to C-terminus: Large ribosomal subunit protein uL11 (141 aa).

Belongs to the universal ribosomal protein uL11 family. In terms of assembly, part of the ribosomal stalk of the 50S ribosomal subunit. Interacts with L10 and the large rRNA to form the base of the stalk. L10 forms an elongated spine to which L12 dimers bind in a sequential fashion forming a multimeric L10(L12)X complex. One or more lysine residues are methylated.

In terms of biological role, forms part of the ribosomal stalk which helps the ribosome interact with GTP-bound translation factors. The chain is Large ribosomal subunit protein uL11 from Sulfurimonas denitrificans (strain ATCC 33889 / DSM 1251) (Thiomicrospira denitrificans (strain ATCC 33889 / DSM 1251)).